Consider the following 332-residue polypeptide: MASGLVRLLQQGHRCLLAPVAPKLVPPVRGVKKGFRAAFRFQKELERQRLLRCPPPPVRRSEKPNWDYHAEIQAFGHRLQENFSLDLLKTAFVNSCYIKSEEAKRQQLGIEKEAVLLNLKSNQELSEQGTSFSQTCLTQFLEDEYPDMPTEGIKNLVDFLTGEEVVCHVARNLAVEQLTLSEEFPVPPAVLQQTFFAVIGALLQSSGPERTALFIRDFLITQMTGKELFEMWKIINPMGLLVEELKKRNVSAPESRLTRQSGGTTALPLYFVGLYCDKKLIAEGPGETVLVAEEEAARVALRKLYGFTENRRPWNYSKPKETLRAEKSITAS.

The transit peptide at 1-30 (MASGLVRLLQQGHRCLLAPVAPKLVPPVRG) directs the protein to the mitochondrion. An RNase III domain is found at 86–228 (DLLKTAFVNS…LITQMTGKEL (143 aa)). Positions 236–306 (NPMGLLVEEL…ARVALRKLYG (71 aa)) constitute a DRBM domain.

It belongs to the ribonuclease III family. Mitochondrion-specific ribosomal protein mL44 subfamily. Component of the mitochondrial large ribosomal subunit (mt-LSU). Mature mammalian 55S mitochondrial ribosomes consist of a small (28S) and a large (39S) subunit. The 28S small subunit contains a 12S ribosomal RNA (12S mt-rRNA) and 30 different proteins. The 39S large subunit contains a 16S rRNA (16S mt-rRNA), a copy of mitochondrial valine transfer RNA (mt-tRNA(Val)), which plays an integral structural role, and 52 different proteins.

Its subcellular location is the mitochondrion. Its function is as follows. Component of the 39S subunit of mitochondrial ribosome. May have a function in the assembly/stability of nascent mitochondrial polypeptides exiting the ribosome. This is Large ribosomal subunit protein mL44 (MRPL44) from Homo sapiens (Human).